A 161-amino-acid chain; its full sequence is Nucleotide-binding protein Csal_2524 (161 aa).

Belongs to the YajQ family.

In terms of biological role, nucleotide-binding protein. In Chromohalobacter salexigens (strain ATCC BAA-138 / DSM 3043 / CIP 106854 / NCIMB 13768 / 1H11), this protein is Nucleotide-binding protein Csal_2524.